Here is a 295-residue protein sequence, read N- to C-terminus: Protein U26 (295 aa).

A run of 8 helical transmembrane segments spans residues 4-24 (LTDS…LYTF), 31-51 (SPLG…LTFK), 66-86 (IVFL…VVMI), 103-123 (VMIM…SLFF), 183-203 (FTVE…FLSM), 218-238 (VFFK…ILSG), 243-263 (VCLY…SIML), and 274-294 (FYAG…MYFG).

Its subcellular location is the membrane. This Human herpesvirus 6A (strain Uganda-1102) (HHV-6 variant A) protein is Protein U26 (U26).